Here is a 508-residue protein sequence, read N- to C-terminus: Maturase K (508 aa).

Belongs to the intron maturase 2 family. MatK subfamily.

The protein localises to the plastid. The protein resides in the chloroplast. Its function is as follows. Usually encoded in the trnK tRNA gene intron. Probably assists in splicing its own and other chloroplast group II introns. The sequence is that of Maturase K from Cunninghamia lanceolata (China fir).